The following is a 145-amino-acid chain: Small t antigen (145 aa).

One can recognise a J domain in the interval 6–82; sequence RLTELLCLPV…PEESGYATFE (77 aa). The interval 58–80 is disordered; the sequence is EGLRADETLEDSDPEPEESGYAT. The segment covering 65 to 75 has biased composition (acidic residues); that stretch reads TLEDSDPEPEE.

Interacts with host PPP2R1A; the interaction inhibits PP2A activity.

The protein resides in the host cytoplasm. The protein localises to the host nucleus. Promotes efficient viral genome replication by accelerating both G1 and S phase progression of the cell cycle. The sequence is that of Small t antigen from Budgerigar fledgling disease virus (BFPyV).